The primary structure comprises 396 residues: Dual specificity mitogen-activated protein kinase kinase dSOR1 (396 aa).

The tract at residues 25–44 (APTPPFKTPSGTDTHSLLGK) is disordered. One can recognise a Protein kinase domain in the interval 87–364 (LEKLGELGSG…LKTLLSHPWI (278 aa)). ATP-binding positions include 93–101 (LGSGNGGVV) and Lys116. The active-site Proton acceptor is Asp209. 2 positions are modified to phosphoserine; by RAF: Ser237 and Ser241.

It belongs to the protein kinase superfamily. STE Ser/Thr protein kinase family. MAP kinase kinase subfamily. As to quaternary structure, interacts with Raf and ksr; Dsor1 binding to ksr probably promotes ksr and Raf dimerization and ksr-mediated Raf transactivation. Post-translationally, phosphorylation on Ser/Thr by MAP kinase kinase kinases regulates positively the kinase activity.

The enzyme catalyses L-seryl-[protein] + ATP = O-phospho-L-seryl-[protein] + ADP + H(+). The catalysed reaction is L-threonyl-[protein] + ATP = O-phospho-L-threonyl-[protein] + ADP + H(+). It catalyses the reaction L-tyrosyl-[protein] + ATP = O-phospho-L-tyrosyl-[protein] + ADP + H(+). In terms of biological role, required downstream of Raf in the sevenless (sev), torso (tor), and Drosophila EGF receptor homolog (DER) signal transduction pathways. Involved in both positive regulation (at the posterior terminus) and negative regulation (at the anterior domain) of tll, as in other terminal class gene products, maybe via the ERK-A kinase. This Drosophila melanogaster (Fruit fly) protein is Dual specificity mitogen-activated protein kinase kinase dSOR1 (Dsor1).